Reading from the N-terminus, the 791-residue chain is Diacylglycerol kinase gamma (791 aa).

Disordered stretches follow at residues 82 to 103 and 117 to 154; these read KPRH…ANSA and DEAC…SSSS. Basic and acidic residues predominate over residues 83–92; sequence PRHETSDHPT. Over residues 94 to 103 the composition is skewed to polar residues; the sequence is GASNSEANSA. 2 EF-hand domains span residues 175-210 and 220-255; these read RPQD…MLHI and ELRP…TIPL. Positions 188, 190, 192, 199, 233, 235, 237, and 244 each coordinate Ca(2+). Phorbol-ester/DAG-type zinc fingers lie at residues 271-321 and 336-385; these read RHAW…IPGC and QHAW…LCDG. Residues 430–564 form the DAGKc domain; sequence PGTHPLLVLV…LDRWHLEVIP (135 aa). A disordered region spans residues 768–791; that stretch reads APMMMGPPQKSSFFSLRRKSRSKD.

Belongs to the eukaryotic diacylglycerol kinase family. Predominantly expressed in retina and in a much lesser extent in the brain. Other tissues contain extremely low levels of DGK-gamma.

It localises to the membrane. It is found in the cytoplasm. Its subcellular location is the cytosol. The protein resides in the cytoskeleton. It catalyses the reaction a 1,2-diacyl-sn-glycerol + ATP = a 1,2-diacyl-sn-glycero-3-phosphate + ADP + H(+). It carries out the reaction 1,2-didecanoyl-sn-glycerol + ATP = 1,2-didecanoyl-sn-glycero-3-phosphate + ADP + H(+). The enzyme catalyses 1-octadecanoyl-2-(5Z,8Z,11Z,14Z-eicosatetraenoyl)-sn-glycerol + ATP = 1-octadecanoyl-2-(5Z,8Z,11Z,14Z-eicosatetraenoyl)-sn-glycero-3-phosphate + ADP + H(+). The catalysed reaction is 1,2-di-(9Z-octadecenoyl)-sn-glycerol + ATP = 1,2-di-(9Z-octadecenoyl)-sn-glycero-3-phosphate + ADP + H(+). It catalyses the reaction 1-octadecanoyl-2-(9Z,12Z)-octadecadienoyl-sn-glycerol + ATP = 1-octadecanoyl-2-(9Z,12Z-octadecadienoyl)-sn-glycero-3-phosphate + ADP + H(+). It functions in the pathway lipid metabolism; glycerolipid metabolism. The activity is calcium-dependent. Requires phosphatidylserine for maximal activity. Functionally, diacylglycerol kinase that converts diacylglycerol/DAG into phosphatidic acid/phosphatidate/PA and regulates the respective levels of these two bioactive lipids. Thereby, acts as a central switch between the signaling pathways activated by these second messengers with different cellular targets and opposite effects in numerous biological processes. Has no apparent specificity with regard to the acyl compositions of diacylglycerol. Specifically expressed in the cerebellum where it controls the level of diacylglycerol which in turn regulates the activity of protein kinase C gamma. Through protein kinase C gamma, indirectly regulates the dendritic development of Purkinje cells, cerebellar long term depression and ultimately cerebellar motor coordination. This is Diacylglycerol kinase gamma (DGKG) from Homo sapiens (Human).